A 34-amino-acid chain; its full sequence is Photosystem II reaction center protein M (34 aa).

A helical membrane pass occupies residues 5-25 (ILAFIATALFILVPTAFLLII).

The protein belongs to the PsbM family. PSII is composed of 1 copy each of membrane proteins PsbA, PsbB, PsbC, PsbD, PsbE, PsbF, PsbH, PsbI, PsbJ, PsbK, PsbL, PsbM, PsbT, PsbX, PsbY, PsbZ, Psb30/Ycf12, at least 3 peripheral proteins of the oxygen-evolving complex and a large number of cofactors. It forms dimeric complexes.

The protein resides in the plastid. Its subcellular location is the chloroplast thylakoid membrane. In terms of biological role, one of the components of the core complex of photosystem II (PSII). PSII is a light-driven water:plastoquinone oxidoreductase that uses light energy to abstract electrons from H(2)O, generating O(2) and a proton gradient subsequently used for ATP formation. It consists of a core antenna complex that captures photons, and an electron transfer chain that converts photonic excitation into a charge separation. This subunit is found at the monomer-monomer interface. The sequence is that of Photosystem II reaction center protein M from Buxus microphylla (Littleleaf boxwood).